A 353-amino-acid polypeptide reads, in one-letter code: UPF0421 protein YgaE (353 aa).

4 helical membrane-spanning segments follow: residues 20–40 (LASWIGLPAPIFAGIAAIFAI), 67–87 (VFGLIFGPSPIMIGLTAVIVI), 103–123 (LVTVIAILESAGDDFLMFALI), and 125–145 (TSTVILGVLSSFIVNLVFLPP).

It belongs to the UPF0421 family.

Its subcellular location is the cell membrane. This Bacillus subtilis (strain 168) protein is UPF0421 protein YgaE (ygaE).